Reading from the N-terminus, the 139-residue chain is Basic phospholipase A2 beta-bungarotoxin A2 chain (139 aa).

Residues Ala1–Ala9 form the signal peptide. The propeptide occupies Ala10–Phe17. Positions 45, 47, and 49 each coordinate Ca(2+). Cys46 and Cys62 are disulfide-bonded. His65 is an active-site residue. Asp66 contacts Ca(2+).

The protein belongs to the phospholipase A2 family. Group I subfamily. D49 sub-subfamily. Heterodimer; disulfide-linked. The A chains have phospholipase A2 activity and the B chains show homology with the basic protease inhibitors. Ca(2+) is required as a cofactor. As to expression, expressed by the venom gland.

Its subcellular location is the secreted. The catalysed reaction is a 1,2-diacyl-sn-glycero-3-phosphocholine + H2O = a 1-acyl-sn-glycero-3-phosphocholine + a fatty acid + H(+). Its function is as follows. Snake venom phospholipase A2 (PLA2) that shows presynaptic neurotoxicity. PLA2 catalyzes the calcium-dependent hydrolysis of the 2-acyl groups in 3-sn-phosphoglycerides. The sequence is that of Basic phospholipase A2 beta-bungarotoxin A2 chain from Bungarus candidus (Malayan krait).